A 153-amino-acid polypeptide reads, in one-letter code: Large ribosomal subunit protein uL30 (153 aa).

Belongs to the universal ribosomal protein uL30 family. Part of the 50S ribosomal subunit.

The sequence is that of Large ribosomal subunit protein uL30 from Metallosphaera sedula (strain ATCC 51363 / DSM 5348 / JCM 9185 / NBRC 15509 / TH2).